We begin with the raw amino-acid sequence, 473 residues long: Serine palmitoyltransferase 1 (473 aa).

The Lumenal portion of the chain corresponds to 1-15 (MATVAEQWVLVEMVQ). The interval 1–66 (MATVAEQWVL…KEELIEEWQP (66 aa)) is interaction with SPTLC2. A helical membrane pass occupies residues 16–36 (ALYEAPAYHLILEGILILWII). The Cytoplasmic segment spans residues 37–473 (RLVFSKTYKL…IREAAQAVLL (437 aa)). Tyrosine 164 bears the Phosphotyrosine; by ABL mark.

The protein belongs to the class-II pyridoxal-phosphate-dependent aminotransferase family. In terms of assembly, component of the serine palmitoyltransferase (SPT) complex, which is also composed of SPTLC2 or SPTLC3 and SPTSSA or SPTSSB. The heterodimer with SPTLC2 or SPTLC3 forms the catalytic core of the enzyme, while SPTSSA or SPTSSB subunits determine substrate specificity. SPT also interacts with ORMDL proteins, especially ORMDL3, which negatively regulate SPT activity in the presence of ceramides. Forms dimers of heterodimers with SPTLC2. Interacts with RTN4 (isoform B). It depends on pyridoxal 5'-phosphate as a cofactor. Phosphorylation at Tyr-164 inhibits activity and promotes cell survival. Expressed in a variety of tissues. Highest expression in brain, kidney and liver. Expressed in brown and white adipose tissues.

The protein resides in the endoplasmic reticulum membrane. The catalysed reaction is L-serine + hexadecanoyl-CoA + H(+) = 3-oxosphinganine + CO2 + CoA. The enzyme catalyses octadecanoyl-CoA + L-serine + H(+) = 3-oxoeicosasphinganine + CO2 + CoA. It carries out the reaction tetradecanoyl-CoA + L-serine + H(+) = 3-oxohexadecasphinganine + CO2 + CoA. It catalyses the reaction dodecanoyl-CoA + L-serine + H(+) = 3-oxotetradecasphinganine + CO2 + CoA. The protein operates within lipid metabolism; sphingolipid metabolism. With respect to regulation, SPT complex catalytic activity is negatively regulated by ORMDL proteins, including ORMDL3, in the presence of ceramides. This mechanism allows to maintain ceramide levels at sufficient concentrations for the production of complex sphingolipids, but which prevents the accumulation of ceramides to levels that trigger apoptosis. In terms of biological role, component of the serine palmitoyltransferase multisubunit enzyme (SPT) that catalyzes the initial and rate-limiting step in sphingolipid biosynthesis by condensing L-serine and activated acyl-CoA (most commonly palmitoyl-CoA) to form long-chain bases. The SPT complex is also composed of SPTLC2 or SPTLC3 and SPTSSA or SPTSSB. Within this complex, the heterodimer with SPTLC2 or SPTLC3 forms the catalytic core. The composition of the serine palmitoyltransferase (SPT) complex determines the substrate preference. The SPTLC1-SPTLC2-SPTSSA complex shows a strong preference for C16-CoA substrate, while the SPTLC1-SPTLC3-SPTSSA isozyme uses both C14-CoA and C16-CoA as substrates, with a slight preference for C14-CoA. The SPTLC1-SPTLC2-SPTSSB complex shows a strong preference for C18-CoA substrate, while the SPTLC1-SPTLC3-SPTSSB isozyme displays an ability to use a broader range of acyl-CoAs, without apparent preference. Required for adipocyte cell viability and metabolic homeostasis. The polypeptide is Serine palmitoyltransferase 1 (Sptlc1) (Mus musculus (Mouse)).